A 173-amino-acid chain; its full sequence is T-cell surface glycoprotein CD3 gamma chain (173 aa).

The signal sequence occupies residues 1–22; that stretch reads MEQGKHLAGLILAVFLLQGTMA. The Extracellular segment spans residues 23-111; it reads HVKEVKVDDN…NCIELNPSTV (89 aa). Residues 24 to 94 enclose the Ig-like domain; sequence VKEVKVDDNR…GSNNQSKSLQ (71 aa). A disulfide bridge connects residues Cys42 and Cys83. 2 N-linked (GlcNAc...) asparagine glycosylation sites follow: Asn45 and Asn88. Residues 112-132 form a helical membrane-spanning segment; the sequence is AGFIFTEIVSIFLLAVGVYFI. Topologically, residues 133–173 are cytoplasmic; the sequence is AGQEGVRQSRASDKQTLLNNDQLYQPLKEREDDQYSHLRKN. Ser141 carries the phosphoserine modification. Residue Ser144 is modified to Phosphoserine; by PKC. Positions 145 to 173 constitute an ITAM domain; the sequence is DKQTLLNNDQLYQPLKEREDDQYSHLRKN. A Di-leucine motif motif is present at residues 149–150; that stretch reads LL.

The TCR-CD3 complex is composed of a CD3D/CD3E and a CD3G/CD3E heterodimers that preferentially associate with TCRalpha and TCRbeta, respectively, to form TCRalpha/CD3E/CD3G and TCRbeta/CD3G/CD3E trimers. In turn, the hexamer interacts with CD3Z homodimer to form the TCR-CD3 complex. Alternatively, TCRalpha and TCRbeta can be replaced by TCRgamma and TCRdelta. Post-translationally, phosphorylated on Tyr residues after T-cell receptor triggering by LCK in association with CD4/CD8. Phosphorylated also by PKC; leading to the TCR complex down-regulation. Phosphorylated on Tyr residues after T-cell receptor triggering by LCK in association with CD4/CD8.

The protein localises to the cell membrane. Part of the TCR-CD3 complex present on T-lymphocyte cell surface that plays an essential role in adaptive immune response. When antigen presenting cells (APCs) activate T-cell receptor (TCR), TCR-mediated signals are transmitted across the cell membrane by the CD3 chains CD3D, CD3E, CD3G and CD3Z. All CD3 chains contain immunoreceptor tyrosine-based activation motifs (ITAMs) in their cytoplasmic domain. Upon TCR engagement, these motifs become phosphorylated by Src family protein tyrosine kinases LCK and FYN, resulting in the activation of downstream signaling pathways. In addition to this role of signal transduction in T-cell activation, CD3G plays an essential role in the dynamic regulation of TCR expression at the cell surface. Indeed, constitutive TCR cycling is dependent on the di-leucine-based (diL) receptor-sorting motif present in CD3G. In Bos taurus (Bovine), this protein is T-cell surface glycoprotein CD3 gamma chain (CD3G).